Reading from the N-terminus, the 211-residue chain is Putative truncated flagellar export/assembly protein LafU (211 aa).

The OmpA-like domain occupies 58–176; it reads LRVLIKDDQN…RIEIMVLTKS (119 aa).

It belongs to the MotB family.

The protein is Putative truncated flagellar export/assembly protein LafU of Escherichia coli (strain K12).